A 113-amino-acid chain; its full sequence is Beta-defensin 112 (113 aa).

Cystine bridges form between Cys54–Cys82, Cys61–Cys75, and Cys65–Cys83.

The protein belongs to the beta-defensin family.

It is found in the secreted. Functionally, has antibacterial activity. This Pan troglodytes (Chimpanzee) protein is Beta-defensin 112 (DEFB112).